The sequence spans 137 residues: Nucleoside diphosphate kinase (137 aa).

ATP-binding residues include lysine 9, phenylalanine 57, arginine 85, threonine 91, arginine 102, and asparagine 112. Catalysis depends on histidine 115, which acts as the Pros-phosphohistidine intermediate.

This sequence belongs to the NDK family. As to quaternary structure, homotetramer. It depends on Mg(2+) as a cofactor.

It localises to the cytoplasm. The catalysed reaction is a 2'-deoxyribonucleoside 5'-diphosphate + ATP = a 2'-deoxyribonucleoside 5'-triphosphate + ADP. It carries out the reaction a ribonucleoside 5'-diphosphate + ATP = a ribonucleoside 5'-triphosphate + ADP. Its function is as follows. Major role in the synthesis of nucleoside triphosphates other than ATP. The ATP gamma phosphate is transferred to the NDP beta phosphate via a ping-pong mechanism, using a phosphorylated active-site intermediate. This is Nucleoside diphosphate kinase from Campylobacter curvus (strain 525.92).